Consider the following 314-residue polypeptide: Carbamate kinase (314 aa).

This sequence belongs to the carbamate kinase family. Homodimer.

The protein resides in the cytoplasm. The enzyme catalyses hydrogencarbonate + NH4(+) + ATP = carbamoyl phosphate + ADP + H2O + H(+). It participates in metabolic intermediate metabolism; carbamoyl phosphate degradation; CO(2) and NH(3) from carbamoyl phosphate: step 1/1. This is Carbamate kinase (arcC) from Clostridium perfringens (strain 13 / Type A).